Consider the following 314-residue polypeptide: DNA-directed RNA polymerase subunit alpha (314 aa).

An alpha N-terminal domain (alpha-NTD) region spans residues 1–228 (MIEIEKPNIE…EHLNIFVGLT (228 aa)). Positions 245 to 314 (KEKVLEMTIE…ELGLGLRNEE (70 aa)) are alpha C-terminal domain (alpha-CTD).

The protein belongs to the RNA polymerase alpha chain family. As to quaternary structure, homodimer. The RNAP catalytic core consists of 2 alpha, 1 beta, 1 beta' and 1 omega subunit. When a sigma factor is associated with the core the holoenzyme is formed, which can initiate transcription.

It carries out the reaction RNA(n) + a ribonucleoside 5'-triphosphate = RNA(n+1) + diphosphate. In terms of biological role, DNA-dependent RNA polymerase catalyzes the transcription of DNA into RNA using the four ribonucleoside triphosphates as substrates. This chain is DNA-directed RNA polymerase subunit alpha, found in Shouchella clausii (strain KSM-K16) (Alkalihalobacillus clausii).